The sequence spans 362 residues: Protein RecA (362 aa).

77–84 is a binding site for ATP; it reads GPESSGKT.

The protein belongs to the RecA family.

It localises to the cytoplasm. Can catalyze the hydrolysis of ATP in the presence of single-stranded DNA, the ATP-dependent uptake of single-stranded DNA by duplex DNA, and the ATP-dependent hybridization of homologous single-stranded DNAs. It interacts with LexA causing its activation and leading to its autocatalytic cleavage. This is Protein RecA from Rhizobium etli (strain ATCC 51251 / DSM 11541 / JCM 21823 / NBRC 15573 / CFN 42).